Reading from the N-terminus, the 559-residue chain is Methionine--tRNA ligase (559 aa).

The 'HIGH' region motif lies at 10–20 (PYINAVPHLGT). 4 residues coordinate Zn(2+): Cys-141, Cys-144, Cys-154, and Cys-157. The 'KMSKS' region motif lies at 331–335 (KFSKS). Lys-334 serves as a coordination point for ATP.

It belongs to the class-I aminoacyl-tRNA synthetase family. MetG type 1 subfamily. The cofactor is Zn(2+).

The protein localises to the cytoplasm. The enzyme catalyses tRNA(Met) + L-methionine + ATP = L-methionyl-tRNA(Met) + AMP + diphosphate. Functionally, is required not only for elongation of protein synthesis but also for the initiation of all mRNA translation through initiator tRNA(fMet) aminoacylation. In Korarchaeum cryptofilum (strain OPF8), this protein is Methionine--tRNA ligase.